Here is a 591-residue protein sequence, read N- to C-terminus: Frizzled-9 (591 aa).

Positions 1 to 22 (MAVAPLRGALLLWQLLAAGGAA) are cleaved as a signal peptide. At 23–229 (LEIGRFDPER…EVFWSRRDKD (207 aa)) the chain is on the extracellular side. The region spanning 34–155 (RGAAPCQAVE…NDPHALCMEA (122 aa)) is the FZ domain. Cystine bridges form between Cys-39–Cys-100, Cys-47–Cys-93, Cys-84–Cys-122, Cys-111–Cys-152, and Cys-115–Cys-139. Asn-53 carries an N-linked (GlcNAc...) asparagine glycan. The required for Wnt-activated receptor activity stretch occupies residues 58–172 (PNLLGHTSQG…PAEPHKGLGM (115 aa)). Asn-158 carries N-linked (GlcNAc...) asparagine glycosylation. A helical membrane pass occupies residues 230–250 (FALVWMAVWSALCFFSTAFTV). Residues 251-266 (LTFLLEPHRFQYPERP) are Cytoplasmic-facing. Residues 267–287 (IIFLSMCYNVYSLAFLIRAVA) traverse the membrane as a helical segment. Over 288-315 (GAQSVACDQEAGALYVIQEGLENTGCTL) the chain is Extracellular. A helical membrane pass occupies residues 316-336 (VFLLLYYFGMASSLWWVVLTL). Residues 337-355 (TWFLAAGKKWGHEAIEAHG) lie on the Cytoplasmic side of the membrane. The chain crosses the membrane as a helical span at residues 356-376 (SYFHMAAWGLPALKTIVILTL). The Extracellular segment spans residues 377 to 400 (RKVAGDELTGLCYVASTDAAALTG). A helical membrane pass occupies residues 401-421 (FVLVPLSGYLVLGSSFLLTGF). At 422 to 447 (VALFHIRKIMKTGGTNTEKLEKLMVK) the chain is on the cytoplasmic side. Residues 448–468 (IGVFSILYTVPATCVIVCYVY) traverse the membrane as a helical segment. The Extracellular portion of the chain corresponds to 469–508 (ERLNMDFWRLRATEQPCAAAAGPGGRRDCSLPGGSVPTVA). The helical transmembrane segment at 509–529 (VFMLKIFMSLVVGITSGVWVW) threads the bilayer. Topologically, residues 530-591 (SSKTFQTWQS…DPSLENPTHL (62 aa)) are cytoplasmic. A Lys-Thr-X-X-X-Trp motif, mediates interaction with the PDZ domain of Dvl family members motif is present at residues 532–537 (KTFQTW). Positions 554 to 591 (ACRAPGSYGRGTHCHYKAPTVVLHMTKTDPSLENPTHL) are required for CTNNB1 accumulation and TCF transcription factor activity.

The protein belongs to the G-protein coupled receptor Fz/Smo family. Ubiquitinated by ZNRF3, leading to its degradation by the proteasome. Expressed predominantly in adult and fetal brain, testis, eye, skeletal muscle and kidney. Moderately expressed in pancreas, thyroid, adrenal cortex, small intestine and stomach. Detected in fetal liver and kidney. Expressed in neural progenitor cells.

The protein resides in the cell membrane. In terms of biological role, receptor for WNT2 that is coupled to the beta-catenin canonical signaling pathway, which leads to the activation of disheveled proteins, inhibition of GSK-3 kinase, nuclear accumulation of beta-catenin and activation of Wnt target genes. Plays a role in neuromuscular junction (NMJ) assembly by negatively regulating the clustering of acetylcholine receptors (AChR) through the beta-catenin canonical signaling pathway. May play a role in neural progenitor cells (NPCs) viability through the beta-catenin canonical signaling pathway by negatively regulating cell cycle arrest leading to inhibition of neuron apoptotic process. During hippocampal development, regulates neuroblast proliferation and apoptotic cell death. Controls bone formation through non canonical Wnt signaling mediated via ISG15. Positively regulates bone regeneration through non canonical Wnt signaling. The sequence is that of Frizzled-9 (FZD9) from Homo sapiens (Human).